A 136-amino-acid chain; its full sequence is Cystatin-2 (136 aa).

The signal sequence occupies residues 1–24 (MALLRGFLVCSLLLLSCICKEALG). Residues 29 to 124 (GGLENASPEE…CTFEVYNIPW (96 aa)) form the Cystatin domain. The Secondary area of contact motif lies at 73 to 77 (QIVSG). 2 disulfides stabilise this stretch: cysteine 91–cysteine 101 and cysteine 115–cysteine 135.

Belongs to the cystatin family. Expressed by the venom gland.

The protein resides in the secreted. Its function is as follows. Inhibits various C1 cysteine proteases including cathepsin L, papain and cathepsin B. This protein has no toxic activity and its function in the venom is unknown. It may play a role as housekeeping or regulatory protein. The polypeptide is Cystatin-2 (Crotalus adamanteus (Eastern diamondback rattlesnake)).